We begin with the raw amino-acid sequence, 271 residues long: uncharacterized protein (271 aa).

The segment at 1–20 (MPDLHTLPAGSRPERAIRNN) is disordered.

Belongs to the PEP2 family.

This is an uncharacterized protein from Aspergillus terreus (strain NIH 2624 / FGSC A1156).